We begin with the raw amino-acid sequence, 253 residues long: Succinate dehydrogenase iron-sulfur subunit (253 aa).

Residues C64, C69, and C84 each coordinate [2Fe-2S] cluster. One can recognise a 4Fe-4S ferredoxin-type domain in the interval R146–F174. [4Fe-4S] cluster contacts are provided by C155, C158, and C161. [3Fe-4S] cluster is bound by residues C165, C212, and C218. C222 is a [4Fe-4S] cluster binding site.

It belongs to the succinate dehydrogenase/fumarate reductase iron-sulfur protein family. In B.subtilis succinate dehydrogenase forms part of an enzyme complex containing three subunits: a flavoprotein, an iron-sulfur protein and cytochrome b-558. The cofactor is [2Fe-2S] cluster. It depends on [3Fe-4S] cluster as a cofactor. Requires [4Fe-4S] cluster as cofactor.

It carries out the reaction a quinone + succinate = fumarate + a quinol. It participates in carbohydrate metabolism; tricarboxylic acid cycle; fumarate from succinate (bacterial route): step 1/1. This chain is Succinate dehydrogenase iron-sulfur subunit (sdhB), found in Bacillus subtilis (strain 168).